The following is a 389-amino-acid chain: Galactokinase (389 aa).

34 to 37 is a binding site for substrate; sequence EHTD. ATP contacts are provided by residues Ser68 and 125–131; that span reads GSGLSSS. Ser131 and Glu163 together coordinate Mg(2+). The active-site Proton acceptor is the Asp175. Tyr225 lines the substrate pocket.

It belongs to the GHMP kinase family. GalK subfamily.

The protein resides in the cytoplasm. The enzyme catalyses alpha-D-galactose + ATP = alpha-D-galactose 1-phosphate + ADP + H(+). The protein operates within carbohydrate metabolism; galactose metabolism. Its function is as follows. Catalyzes the transfer of the gamma-phosphate of ATP to D-galactose to form alpha-D-galactose-1-phosphate (Gal-1-P). This chain is Galactokinase, found in Clostridium acetobutylicum (strain ATCC 824 / DSM 792 / JCM 1419 / IAM 19013 / LMG 5710 / NBRC 13948 / NRRL B-527 / VKM B-1787 / 2291 / W).